Here is a 1016-residue protein sequence, read N- to C-terminus: Coiled-coil domain-containing protein 57 (1016 aa).

A centrosomal targeting domain region spans residues 1-503 (MLPLCSEREL…HGLLPGQEAQ (503 aa)). Coiled-coil stretches lie at residues 14 to 607 (LARK…PVKT), 676 to 700 (SEVD…KHLK), and 748 to 775 (VTHL…LLEM). Disordered stretches follow at residues 500-519 (QEAQ…DSPS) and 549-573 (HLPP…DSTP). Residues 604 to 1016 (PVKTSVATAD…SRIRNYNLKD (413 aa)) are microtubule binding domain. Disordered stretches follow at residues 781 to 921 (AEQG…LASS) and 933 to 1016 (GSSP…NLKD). 2 stretches are compositionally biased toward polar residues: residues 846 to 859 (QPHS…TNTP) and 934 to 945 (SSPSGVPSQDNS).

Interacts with CEP63; the interaction is required for their location to proximal end of centrioles. Interacts with microtubules.

It is found in the cytoplasm. Its subcellular location is the cytoskeleton. It localises to the microtubule organizing center. The protein resides in the centrosome. The protein localises to the centriolar satellite. It is found in the centriole. Its subcellular location is the spindle. In terms of biological role, pleiotropic regulator of centriole duplication, mitosis, and ciliogenesis. Critical interface between centrosome and microtubule-mediated cellular processes. Centriole duplication protein required for recruitment of CEP63, CEP152, and PLK4 to the centrosome. Independent of its centrosomal targeting, localizes to and interacts with microtubules and regulates microtubule nucleation, stability, and mitotic progression. This Mus musculus (Mouse) protein is Coiled-coil domain-containing protein 57.